The following is a 304-amino-acid chain: Energy-coupling factor transporter ATP-binding protein EcfA2 (304 aa).

Positions 11-260 constitute an ABC transporter domain; that stretch reads LKADEILAVS…QTFLEKTTIV (250 aa). Residue 54-61 coordinates ATP; it reads GDSGSGKS.

This sequence belongs to the ABC transporter superfamily. Energy-coupling factor EcfA family. As to quaternary structure, forms a stable energy-coupling factor (ECF) transporter complex composed of 2 membrane-embedded substrate-binding proteins (S component), 2 ATP-binding proteins (A component) and 2 transmembrane proteins (T component).

The protein localises to the cell membrane. Its function is as follows. ATP-binding (A) component of a common energy-coupling factor (ECF) ABC-transporter complex. Unlike classic ABC transporters this ECF transporter provides the energy necessary to transport a number of different substrates. The polypeptide is Energy-coupling factor transporter ATP-binding protein EcfA2 (Mycoplasma genitalium (strain ATCC 33530 / DSM 19775 / NCTC 10195 / G37) (Mycoplasmoides genitalium)).